The primary structure comprises 201 residues: Recombination protein RecR (201 aa).

Residues 57–72 (CADCRTFTEQDVCNIC) form a C4-type zinc finger. The 96-residue stretch at 81 to 176 (GQICVVESPA…EASRIAHGVP (96 aa)) folds into the Toprim domain.

The protein belongs to the RecR family.

In terms of biological role, may play a role in DNA repair. It seems to be involved in an RecBC-independent recombinational process of DNA repair. It may act with RecF and RecO. This chain is Recombination protein RecR, found in Salmonella agona (strain SL483).